Consider the following 102-residue polypeptide: NADH-quinone oxidoreductase subunit K (102 aa).

A run of 3 helical transmembrane segments spans residues 6 to 26, 30 to 50, and 64 to 84; these read MHHG…GILV, LIFI…AFVV, and FIFI…LLLL.

The protein belongs to the complex I subunit 4L family. NDH-1 is composed of 14 different subunits. Subunits NuoA, H, J, K, L, M, N constitute the membrane sector of the complex.

The protein resides in the cell inner membrane. It carries out the reaction a quinone + NADH + 5 H(+)(in) = a quinol + NAD(+) + 4 H(+)(out). In terms of biological role, NDH-1 shuttles electrons from NADH, via FMN and iron-sulfur (Fe-S) centers, to quinones in the respiratory chain. The immediate electron acceptor for the enzyme in this species is believed to be ubiquinone. Couples the redox reaction to proton translocation (for every two electrons transferred, four hydrogen ions are translocated across the cytoplasmic membrane), and thus conserves the redox energy in a proton gradient. The protein is NADH-quinone oxidoreductase subunit K of Nitrosospira multiformis (strain ATCC 25196 / NCIMB 11849 / C 71).